Here is a 307-residue protein sequence, read N- to C-terminus: L-carnitine dehydrogenase (307 aa).

8–13 (GTGVIG) contacts NAD(+).

This sequence belongs to the 3-hydroxyacyl-CoA dehydrogenase family. L-carnitine dehydrogenase subfamily. In terms of assembly, homodimer.

Its subcellular location is the cytoplasm. The enzyme catalyses carnitine + NAD(+) = 3-dehydrocarnitine + NADH + H(+). Its pathway is amine and polyamine metabolism; carnitine metabolism. Catalyzes the NAD(+)-dependent oxidation of L-carnitine to 3-dehydrocarnitine. In Oceanobacillus iheyensis (strain DSM 14371 / CIP 107618 / JCM 11309 / KCTC 3954 / HTE831), this protein is L-carnitine dehydrogenase.